Reading from the N-terminus, the 74-residue chain is uncharacterized protein (74 aa).

Residues 15 to 32 form a helical membrane-spanning segment; it reads FLHALTVTFLSDIFVWLV.

The protein resides in the membrane. This is an uncharacterized protein from Saccharomyces cerevisiae (strain ATCC 204508 / S288c) (Baker's yeast).